The sequence spans 332 residues: Ketol-acid reductoisomerase (NADP(+)) (332 aa).

The KARI N-terminal Rossmann domain maps to 3–183 (TEIFYDADAD…GGARAGVIKT (181 aa)). NADP(+) contacts are provided by residues 26-29 (YGSQ), Ser-52, Ser-54, and 84-87 (DTKQ). The active site involves His-109. Gly-135 is an NADP(+) binding site. The region spanning 184–329 (TFTEETETDL…KKLRSLMSWT (146 aa)) is the KARI C-terminal knotted domain. Residues Asp-192, Glu-196, Glu-228, and Glu-232 each contribute to the Mg(2+) site. Ser-253 contributes to the substrate binding site.

It belongs to the ketol-acid reductoisomerase family. Mg(2+) is required as a cofactor.

The catalysed reaction is (2R)-2,3-dihydroxy-3-methylbutanoate + NADP(+) = (2S)-2-acetolactate + NADPH + H(+). It catalyses the reaction (2R,3R)-2,3-dihydroxy-3-methylpentanoate + NADP(+) = (S)-2-ethyl-2-hydroxy-3-oxobutanoate + NADPH + H(+). It participates in amino-acid biosynthesis; L-isoleucine biosynthesis; L-isoleucine from 2-oxobutanoate: step 2/4. It functions in the pathway amino-acid biosynthesis; L-valine biosynthesis; L-valine from pyruvate: step 2/4. Functionally, involved in the biosynthesis of branched-chain amino acids (BCAA). Catalyzes an alkyl-migration followed by a ketol-acid reduction of (S)-2-acetolactate (S2AL) to yield (R)-2,3-dihydroxy-isovalerate. In the isomerase reaction, S2AL is rearranged via a Mg-dependent methyl migration to produce 3-hydroxy-3-methyl-2-ketobutyrate (HMKB). In the reductase reaction, this 2-ketoacid undergoes a metal-dependent reduction by NADPH to yield (R)-2,3-dihydroxy-isovalerate. The sequence is that of Ketol-acid reductoisomerase (NADP(+)) from Saccharopolyspora erythraea (strain ATCC 11635 / DSM 40517 / JCM 4748 / NBRC 13426 / NCIMB 8594 / NRRL 2338).